Here is a 46-residue protein sequence, read N- to C-terminus: Light-harvesting protein B800/850/890 alpha-1 chain (46 aa).

Topologically, residues 1 to 12 (MWRLWKLYDPRR) are cytoplasmic. Residues 13–33 (VLIGIFSWLAVLALVIHFILL) traverse the membrane as a helical segment. His29 is a binding site for a bacteriochlorophyll. At 34–46 (STDRFNWVGGAAN) the chain is on the periplasmic side.

The protein belongs to the antenna complex alpha subunit family. The core complex is formed by different alpha and beta chains, binding bacteriochlorophyll molecules, and arranged most probably in tetrameric structures disposed around the reaction center. The non-pigmented gamma chains may constitute additional components.

The protein localises to the cell inner membrane. Functionally, antenna complexes are light-harvesting systems, which transfer the excitation energy to the reaction centers. The sequence is that of Light-harvesting protein B800/850/890 alpha-1 chain from Halorhodospira halophila (strain DSM 244 / SL1) (Ectothiorhodospira halophila (strain DSM 244 / SL1)).